The chain runs to 882 residues: MQTKYDFKKVEHQRYQQWLEKKYFCANPNANKKTFTVVIPPPNVTGKLHLGHAWNNTIQDIIIRFKKMQGFDVLFLPGMDHAGIATQNKVKEQLKQEGLLTKTLSKEIFLKYAWQWKEEHAQNIRQQWQVLGLHLDYNFEKFTLDPDLSQQVQEVFGKLFQKKLIYRDYKIINWDPETKTALSNVEVNYHETEGKLYYIKYFLVDFPTNSNLSDASLVPSFLEIATTRPETMFADQALMVNPNDPRYQSFIGKKVFIPDTNIQIPVISDNYVDINFGTGVVKVTPGHDINDFEVAKRHQLKALLCMNEDGTMNDLALQYQGLDRFVCRQKLVQTLKQKGFFTKTENHLHKVGYSSISDAIIEPRLSLQWVLKTKAIAQIALKTNKINFFPLRFENIFNNWLQNIEDWCISRQLWWGHQIPAWHKGQEIKVQIESPGPEWSLDCDVLDTWFSSALWPFSTLGWPNCNAPLFQNRFPTDVLVTGYDILTFWVSKMVFQSILLTHKDPFKDVLLHGLVRDNKGQKMSKSKGNGVDPLEVVAKYGTDALRWFLTTNAAPGFDLFYDETKVASSWNFINKLWNISRFVKLNTSTLDTDFDINLLTLTQKALLTQLHLTTQKVTTLYQKYELKEIGKILYHFVWEDFANWHLEFAKHDLDQNNSNLTNLHNSQKFLVYMMKHILQLLHPFIPFVTDALYENFDNKTNITQTTLQKTSYCNLDALADFENLKNLIIKTRHLRQESNINCKLNLELEVASQFSTILQDFVNLQQALEKFFKTLQIKITNKVTNSKKTIWLIEKNLSLYIDRKTLNELNETKFESNFLQQKNTLLKEIKRSETILNNPSFLQKAASAKIEIEKKKYESYCKQYKKLLESKNNSNPLNPNKK.

The 'HIGH' region signature appears at 42–52; that stretch reads PNVTGKLHLGH. The short motif at 522–526 is the 'KMSKS' region element; sequence KMSKS. Lys525 contributes to the ATP binding site. Residues 849-873 adopt a coiled-coil conformation; sequence KIEIEKKKYESYCKQYKKLLESKNN.

The protein belongs to the class-I aminoacyl-tRNA synthetase family. ValS type 1 subfamily. In terms of assembly, monomer.

Its subcellular location is the cytoplasm. It catalyses the reaction tRNA(Val) + L-valine + ATP = L-valyl-tRNA(Val) + AMP + diphosphate. Catalyzes the attachment of valine to tRNA(Val). As ValRS can inadvertently accommodate and process structurally similar amino acids such as threonine, to avoid such errors, it has a 'posttransfer' editing activity that hydrolyzes mischarged Thr-tRNA(Val) in a tRNA-dependent manner. The sequence is that of Valine--tRNA ligase from Onion yellows phytoplasma (strain OY-M).